A 267-amino-acid chain; its full sequence is UPF0328 protein ECU06_0070 (267 aa).

The protein belongs to the UPF0328 family.

In Encephalitozoon cuniculi (strain GB-M1) (Microsporidian parasite), this protein is UPF0328 protein ECU06_0070.